Here is a 192-residue protein sequence, read N- to C-terminus: GTP cyclohydrolase 1 (192 aa).

Zn(2+) is bound by residues cysteine 82, histidine 85, and cysteine 153.

Belongs to the GTP cyclohydrolase I family. Toroid-shaped homodecamer, composed of two pentamers of five dimers.

It carries out the reaction GTP + H2O = 7,8-dihydroneopterin 3'-triphosphate + formate + H(+). Its pathway is cofactor biosynthesis; 7,8-dihydroneopterin triphosphate biosynthesis; 7,8-dihydroneopterin triphosphate from GTP: step 1/1. In Rickettsia bellii (strain OSU 85-389), this protein is GTP cyclohydrolase 1.